A 260-amino-acid chain; its full sequence is MNKFLIIDGLNLVRRIYAAIPDENDMDSLTDRVSVACTKLLRIHHPTHVAIVWDGDEISWRKQLYPDYKKGRKPMPEPLAAGLSALQEHLKSLPIQSIYAAAEADDVIATLAMKTAKAQGEAVIVSTDKGFSQLNHPRISQWDHFNQQYLNIAELEQKLGVDRNQFLDLMALAGDSGNKIPGIAGIGPKSAAELLRTFRTLATLFSSLSNLGAKQAKKLAEGRDMARLSYKLAQLQTDLPLNINLRDFRVNGPANTQQAE.

Asp105 lines the Mg(2+) pocket. Positions 164–259 (NQFLDLMALA…VNGPANTQQA (96 aa)) constitute a 5'-3' exonuclease domain. 5 residues coordinate K(+): Leu172, Ala173, Pro181, Ile183, and Ile186. Residues 185 to 190 (GIGPKS) are interaction with DNA.

It belongs to the Xni family. Requires Mg(2+) as cofactor. The cofactor is K(+).

In terms of biological role, has flap endonuclease activity. During DNA replication, flap endonucleases cleave the 5'-overhanging flap structure that is generated by displacement synthesis when DNA polymerase encounters the 5'-end of a downstream Okazaki fragment. The sequence is that of Flap endonuclease Xni from Shewanella sp. (strain MR-4).